A 337-amino-acid polypeptide reads, in one-letter code: 3-isopropylmalate dehydrogenase (337 aa).

The substrate site is built by R88, R98, R122, and D212. Residues D212, D236, and D240 each coordinate Mg(2+). NAD(+) is bound at residue 272–284 (GSAPDIAGKGIAD).

It belongs to the isocitrate and isopropylmalate dehydrogenases family. LeuB type 2 subfamily. In terms of assembly, homodimer. Requires Mg(2+) as cofactor. Mn(2+) serves as cofactor.

It is found in the cytoplasm. It catalyses the reaction (2R,3S)-3-isopropylmalate + NAD(+) = 4-methyl-2-oxopentanoate + CO2 + NADH. The protein operates within amino-acid biosynthesis; L-leucine biosynthesis; L-leucine from 3-methyl-2-oxobutanoate: step 3/4. Its function is as follows. Catalyzes the oxidation of 3-carboxy-2-hydroxy-4-methylpentanoate (3-isopropylmalate) to 3-carboxy-4-methyl-2-oxopentanoate. The product decarboxylates to 4-methyl-2 oxopentanoate. The protein is 3-isopropylmalate dehydrogenase of Rhodococcus erythropolis (strain PR4 / NBRC 100887).